The primary structure comprises 259 residues: Proteasome assembly chaperone 2 (259 aa).

This sequence belongs to the PSMG2 family. As to quaternary structure, forms a heterodimer with psmg1. Post-translationally, degraded by the proteasome upon completion of 20S proteasome maturation.

It localises to the nucleus. Chaperone protein which promotes assembly of the 20S proteasome as part of a heterodimer with psmg1. The chain is Proteasome assembly chaperone 2 from Xenopus laevis (African clawed frog).